The following is a 286-amino-acid chain: ATP synthase gamma chain (286 aa).

It belongs to the ATPase gamma chain family. F-type ATPases have 2 components, CF(1) - the catalytic core - and CF(0) - the membrane proton channel. CF(1) has five subunits: alpha(3), beta(3), gamma(1), delta(1), epsilon(1). CF(0) has three main subunits: a, b and c.

Its subcellular location is the cell inner membrane. Functionally, produces ATP from ADP in the presence of a proton gradient across the membrane. The gamma chain is believed to be important in regulating ATPase activity and the flow of protons through the CF(0) complex. This chain is ATP synthase gamma chain, found in Shewanella pealeana (strain ATCC 700345 / ANG-SQ1).